The sequence spans 268 residues: M1-specific T cell receptor alpha chain (268 aa).

Positions 1-19 are cleaved as a signal peptide; sequence MVLKFSVSILWIQLAWVST. The Ig-like V-type domain occupies 20-107; it reads QLLEQSPQFL…QPGDTGLYLC (88 aa). The tract at residues 20–109 is t cell receptor alpha variable 27; it reads QLLEQSPQFL…GDTGLYLCAG (90 aa). N-linked (GlcNAc...) asparagine glycans are attached at residues Asn36 and Asn42. A disulfide bridge links Cys41 with Cys107. Residues 45-49 form a CDR1 region; sequence SVFSS. The CDR2 stretch occupies residues 67-69; sequence VVT. The CDR3 stretch occupies residues 107 to 118; it reads CAGGGSQGNLIF. The segment at 110 to 128 is t cell receptor alpha joining 42; sequence GGSQGNLIFGKGTKLSVKP. Positions 129 to 268 are t cell receptor alpha constant; it reads IQNPDPAVYQ…LLMTLRLWSS (140 aa). In terms of domain architecture, Ig-like C1-type spans 147-235; sequence KSVCLFTDFD…LVEKSFETDT (89 aa). A disulfide bond links Cys150 and Cys200. Residues Asn160, Asn194, Asn205, and Asn241 are each glycosylated (N-linked (GlcNAc...) asparagine). Residues 222-243 are connecting peptide; it reads CDVKLVEKSFETDTNLNFQNLS. Residues 244 to 266 form a helical membrane-spanning segment; that stretch reads VIGFRILLLKVAGFNLLMTLRLW. Topologically, residues 267 to 268 are cytoplasmic; the sequence is SS.

Disulfide-linked heterodimer with TRBV19*01J2S7*01C*02 beta chain. The TR primarily interacts via its CDR3-beta domain with M/matrix protein 1-derived peptide (GILGFVFTL) displayed by HLA-A*02.01 in a 'peg-notch' recognition mode. The alpha-beta TR associates with the transmembrane signaling CD3 coreceptor proteins to form the TR-CD3 (TCR). The assembly of alpha-beta TR heterodimers with CD3 occurs in the endoplasmic reticulum where a single alpha-beta TR heterodimer associates with one CD3D-CD3E heterodimer, one CD3G-CD3E heterodimer and one CD247 homodimer forming a stable octameric structure. CD3D-CD3E and CD3G-CD3E heterodimers preferentially associate with TR alpha and TR beta chains (via TM domain), respectively. The association of the CD247 homodimer is the last step of TCR assembly in the endoplasmic reticulum and is required for transport to the cell surface. As to expression, expressed in M/matrix protein 1-specific effector and memory CD8-positive T cells readily detectable in the peripheral blood, secondary lymphoid organs and lung (primary site of infection) of IAV infected individuals.

The protein resides in the cell membrane. In terms of biological role, the alpha chain of TRAV27*01J42*01C*01/TRBV19*01J2S7*01C*02 alpha-beta T cell receptor (TR) clonotype that is specific for HLA-A*02:01-restricted M/matrix protein 1 immunodominant epitope GILGFVFTL of influenza A virus (IAV). Classified as a public TR clonotype, it is preferentially selected in effector memory CD8-positive T cells among multiple HLA-A*02:01 carriers and confers long-lived immunity against IAV infection. Can cross-recognize sporadically emerging IAV variants by molecular mimicry, inducing immunity toward different influenza strains. Antigen recognition initiates TR-CD3 clustering on the cell surface and intracellular activation of LCK that phosphorylates the ITAM motifs of CD3G, CD3D, CD3E and CD247 enabling the recruitment of ZAP70. In turn, ZAP70 phosphorylates LAT, which recruits numerous signaling molecules to form the LAT signalosome. The LAT signalosome propagates signal branching to three major signaling pathways, the calcium, the mitogen-activated protein kinase (MAPK) kinase and the nuclear factor NF-kappa-B (NF-kB) pathways, leading to the mobilization of transcription factors that are critical for gene expression and essential for T cell differentiation into effector/memory T cells. The polypeptide is M1-specific T cell receptor alpha chain (Homo sapiens (Human)).